A 54-amino-acid polypeptide reads, in one-letter code: uncharacterized protein (54 aa).

The span at 1–28 shows a compositional bias: basic and acidic residues; it reads MDRKKDEIQRKYREQMREKKEREKEDGS. Residues 1-29 form a disordered region; that stretch reads MDRKKDEIQRKYREQMREKKEREKEDGSS. The chain crosses the membrane as a helical span at residues 31 to 51; it reads TFEIVVVLAIIILMFFFNSVF.

It is found in the cell membrane. This is an uncharacterized protein from Bacillus subtilis (strain 168).